The primary structure comprises 140 residues: MADVDESDLKILEILRKNARTPYTSIAKELKISEAAVRKRIEKLIKMGVIKRFTIDYELENEIRAIVMVKTNPQIPTPEISKKIIKIQGVEFVYETTGDYDILTVVRGTNISSINKTIDDIRSLQGVLSTNSTIVLRVWF.

The HTH asnC-type domain maps to 4-67 (VDESDLKILE…ELENEIRAIV (64 aa)). The H-T-H motif DNA-binding region spans 23–42 (YTSIAKELKISEAAVRKRIE).

As to quaternary structure, homotetramer.

Its subcellular location is the cytoplasm. It participates in amino-acid biosynthesis; L-lysine biosynthesis via AAA pathway [regulation]. In terms of biological role, in the absence or at low concentrations of lysine, activates the biosynthesis of this amino acid via the alpha-aminoadipate (AAA) pathway. The sequence is that of HTH-type transcriptional regulator LysM (lysM) from Sulfurisphaera tokodaii (strain DSM 16993 / JCM 10545 / NBRC 100140 / 7) (Sulfolobus tokodaii).